The sequence spans 481 residues: Phosphoglycerate kinase 1, chloroplastic (481 aa).

A chloroplast-targeting transit peptide spans 1 to 75; the sequence is MASAAASSAF…VRGKGSRGVV (75 aa). Position 81 is a phosphoserine (Ser-81). 11 residues coordinate (2R)-3-phosphoglycerate: Ala-99, Asp-100, Asn-102, Arg-116, Thr-138, His-139, Gly-141, Arg-142, Arg-197, His-229, and Arg-230. Gly-275 lines the ADP pocket. Gly-275 provides a ligand contact to CDP. Lys-277 and Lys-281 together coordinate AMP. Lys-281 contributes to the ATP binding site. Gly-299 contributes to the ADP binding site. Residue Gly-299 coordinates CDP. The AMP site is built by Gly-300 and Gly-372. Residues Gly-300 and Gly-372 each contribute to the ATP site. Residues Gly-397 and Phe-402 each coordinate CDP. Residue Phe-402 participates in ADP binding. Glu-403 is a binding site for AMP. ATP-binding residues include Glu-403, Asp-434, and Ser-435. Asp-434 provides a ligand contact to Mg(2+).

It belongs to the phosphoglycerate kinase family. As to quaternary structure, monomer. Binds to FTSZ2-1 and FTSZ2-2. Mg(2+) is required as a cofactor.

It is found in the plastid. Its subcellular location is the chloroplast. It carries out the reaction (2R)-3-phosphoglycerate + ATP = (2R)-3-phospho-glyceroyl phosphate + ADP. It participates in carbohydrate biosynthesis; Calvin cycle. Functionally, may trigger the phosphorylation of FTSZ2-1 and FTSZ2-2. In Arabidopsis thaliana (Mouse-ear cress), this protein is Phosphoglycerate kinase 1, chloroplastic.